A 191-amino-acid polypeptide reads, in one-letter code: Cell number regulator 1 (191 aa).

The tract at residues 13–44 is disordered; that stretch reads FSAGAPPTAPPPPAAYHQQQQQHGANMDTSRP. Low complexity predominate over residues 27 to 37; sequence AYHQQQQQHGA. Residues 91–113 form a helical membrane-spanning segment; it reads IASGLVYGLICASTGMGCLYSCL.

This sequence belongs to the cornifelin family. In terms of tissue distribution, expressed in roots, coleoptiles, stalks and silks. Detected in leaves, apical meristems, immature ears and pericarps. Highest expression in coleoptiles and silks.

It is found in the membrane. In terms of biological role, acts as a negative regulator of cell number. The polypeptide is Cell number regulator 1 (CNR1) (Zea mays (Maize)).